A 443-amino-acid polypeptide reads, in one-letter code: tRNA modification GTPase MnmE (443 aa).

(6S)-5-formyl-5,6,7,8-tetrahydrofolate-binding residues include Arg23, Glu81, and Lys119. The TrmE-type G domain maps to 214 to 369; the sequence is GMRVAILGKP…LLSALKERAI (156 aa). GTP contacts are provided by residues 224 to 229, 243 to 249, and 268 to 271; these read NVGKST, SEYPGTT, and DTAG. The Mg(2+) site is built by Ser228 and Thr249. Residue Lys443 participates in (6S)-5-formyl-5,6,7,8-tetrahydrofolate binding.

Belongs to the TRAFAC class TrmE-Era-EngA-EngB-Septin-like GTPase superfamily. TrmE GTPase family. As to quaternary structure, homodimer. Heterotetramer of two MnmE and two MnmG subunits. K(+) serves as cofactor.

It localises to the cytoplasm. Its function is as follows. Exhibits a very high intrinsic GTPase hydrolysis rate. Involved in the addition of a carboxymethylaminomethyl (cmnm) group at the wobble position (U34) of certain tRNAs, forming tRNA-cmnm(5)s(2)U34. The protein is tRNA modification GTPase MnmE of Anaplasma marginale (strain St. Maries).